Reading from the N-terminus, the 213-residue chain is Pyridoxine/pyridoxamine 5'-phosphate oxidase (213 aa).

Residues 60–65 (RMVLMK), 75–76 (YS), Lys82, and Gln104 each bind FMN. Lys65 provides a ligand contact to substrate. The substrate site is built by Tyr122 and Arg126. FMN-binding positions include 139-140 (QS) and Trp184. Residue 190–192 (RLH) coordinates substrate. Arg194 contributes to the FMN binding site.

It belongs to the pyridoxamine 5'-phosphate oxidase family. As to quaternary structure, homodimer. FMN serves as cofactor.

It carries out the reaction pyridoxamine 5'-phosphate + O2 + H2O = pyridoxal 5'-phosphate + H2O2 + NH4(+). The enzyme catalyses pyridoxine 5'-phosphate + O2 = pyridoxal 5'-phosphate + H2O2. The protein operates within cofactor metabolism; pyridoxal 5'-phosphate salvage; pyridoxal 5'-phosphate from pyridoxamine 5'-phosphate: step 1/1. Its pathway is cofactor metabolism; pyridoxal 5'-phosphate salvage; pyridoxal 5'-phosphate from pyridoxine 5'-phosphate: step 1/1. Its function is as follows. Catalyzes the oxidation of either pyridoxine 5'-phosphate (PNP) or pyridoxamine 5'-phosphate (PMP) into pyridoxal 5'-phosphate (PLP). This chain is Pyridoxine/pyridoxamine 5'-phosphate oxidase, found in Rhodopseudomonas palustris (strain BisA53).